We begin with the raw amino-acid sequence, 90 residues long: MAPALRSLLSPRTLLLLLLSLALLGARAEPATGSAVPAQSRPCVDCHAFEFMQRALQDLRKTAYSLDARTETLLLQAERRALCACWPAGR.

A signal peptide spans 1 to 28 (MAPALRSLLSPRTLLLLLLSLALLGARA).

It belongs to the NICOL family. Interacts with NELL2; triggers epididymal differentiation. Interacts with cell surface receptor TFRC; the interaction mediates uptake of NICOL1 into fibroblasts. As to expression, expression is enriched in both male and female reproductive organs, including the testis, epididymis, seminal vesicles, coagulating glands, ovary and uterus, and in various non-reproductive organs such as brain, thymus and liver. In testis, expressed in both germ cells and Sertoli cells. Also expressed at low levels in the kidney. Expressed during neocortex and cerebellum development.

It localises to the secreted. Its subcellular location is the cytoplasm. The protein resides in the perinuclear region. MRNA-binding protein which interacts with a range of target mRNAs including SERPINE1, ACTA2, CCN2 and COL4A1 and may promote extracellular matrix production. Binds to the 3'-UTR of SERPINE1 mRNA and stabilizes the mRNA, possibly by competing for binding with SERBP1 and preventing SERBP1-mediated mRNA degradation. Also binds to the 3'-UTR of ACTA2. Testis-derived lumicrine factor that triggers epididymal differentiation and sperm maturation. In Mus musculus (Mouse), this protein is NELL2-interacting cell ontogeny regulator 1.